Reading from the N-terminus, the 309-residue chain is MLKQRTLKKEISATGVGLHSGDKVTLTLRPAAPDTGIVFRRIDLPDTAEFKVQPHLVTDTKLCSALECNGARVATIEHLMSALAGLGIDNIRIELNAGEVPIMDGSAGPFVFLLQQAGIVEQDAMKKFIRIKKTVEYREGDKWVRFDPYFGFKLDFTIDFNHPAVEHTGQRITIDFADNSYIKEISRARTFGFMHEVEALRSMGLARGGSLDNAIVLDEFRVLNSDGLRYDDEFVKHKMLDAIGDLYVLGHPLIGAFSAYKAGHYMNNQLLRALLADGDAWEYATFAKIEEAPGAFRNPIGLPPALQYV.

His78, His237, and Asp241 together coordinate Zn(2+). His264 serves as the catalytic Proton donor.

It belongs to the LpxC family. The cofactor is Zn(2+).

The enzyme catalyses a UDP-3-O-[(3R)-3-hydroxyacyl]-N-acetyl-alpha-D-glucosamine + H2O = a UDP-3-O-[(3R)-3-hydroxyacyl]-alpha-D-glucosamine + acetate. It participates in glycolipid biosynthesis; lipid IV(A) biosynthesis; lipid IV(A) from (3R)-3-hydroxytetradecanoyl-[acyl-carrier-protein] and UDP-N-acetyl-alpha-D-glucosamine: step 2/6. Catalyzes the hydrolysis of UDP-3-O-myristoyl-N-acetylglucosamine to form UDP-3-O-myristoylglucosamine and acetate, the committed step in lipid A biosynthesis. This Methylobacillus flagellatus (strain ATCC 51484 / DSM 6875 / VKM B-1610 / KT) protein is UDP-3-O-acyl-N-acetylglucosamine deacetylase.